The following is a 333-amino-acid chain: tRNA(Ile)-lysidine synthase (333 aa).

33–38 (SGGADS) is an ATP binding site.

Belongs to the tRNA(Ile)-lysidine synthase family.

The protein resides in the cytoplasm. It carries out the reaction cytidine(34) in tRNA(Ile2) + L-lysine + ATP = lysidine(34) in tRNA(Ile2) + AMP + diphosphate + H(+). Its function is as follows. Ligates lysine onto the cytidine present at position 34 of the AUA codon-specific tRNA(Ile) that contains the anticodon CAU, in an ATP-dependent manner. Cytidine is converted to lysidine, thus changing the amino acid specificity of the tRNA from methionine to isoleucine. This is tRNA(Ile)-lysidine synthase from Salinispora tropica (strain ATCC BAA-916 / DSM 44818 / JCM 13857 / NBRC 105044 / CNB-440).